A 319-amino-acid polypeptide reads, in one-letter code: Small ribosomal subunit protein mS35 (319 aa).

A mitochondrion-targeting transit peptide spans 1–30 (MKVPLGLWKVSRGNLWSTQKRVLTMSRCLN).

Belongs to the mitochondrion-specific ribosomal protein mS35 family. In terms of assembly, component of the mitochondrial small ribosomal subunit (mt-SSU). Mature yeast 74S mitochondrial ribosomes consist of a small (37S) and a large (54S) subunit. The 37S small subunit contains a 15S ribosomal RNA (15S mt-rRNA) and 34 different proteins. The 54S large subunit contains a 21S rRNA (21S mt-rRNA) and 46 different proteins.

The protein localises to the mitochondrion. Component of the mitochondrial ribosome (mitoribosome), a dedicated translation machinery responsible for the synthesis of mitochondrial genome-encoded proteins, including at least some of the essential transmembrane subunits of the mitochondrial respiratory chain. The mitoribosomes are attached to the mitochondrial inner membrane and translation products are cotranslationally integrated into the membrane. The protein is Small ribosomal subunit protein mS35 (RSM24) of Saccharomyces cerevisiae (strain ATCC 204508 / S288c) (Baker's yeast).